We begin with the raw amino-acid sequence, 239 residues long: Pyridoxine 5'-phosphate synthase (239 aa).

Asn-7 serves as a coordination point for 3-amino-2-oxopropyl phosphate. Residue Asp-9–His-10 coordinates 1-deoxy-D-xylulose 5-phosphate. Arg-18 contacts 3-amino-2-oxopropyl phosphate. Catalysis depends on His-43, which acts as the Proton acceptor. 1-deoxy-D-xylulose 5-phosphate contacts are provided by Arg-45 and His-50. Glu-70 functions as the Proton acceptor in the catalytic mechanism. Thr-100 lines the 1-deoxy-D-xylulose 5-phosphate pocket. The active-site Proton donor is the His-191. 3-amino-2-oxopropyl phosphate-binding positions include Gly-192 and Gly-213–His-214.

This sequence belongs to the PNP synthase family. Homooctamer; tetramer of dimers.

It localises to the cytoplasm. It carries out the reaction 3-amino-2-oxopropyl phosphate + 1-deoxy-D-xylulose 5-phosphate = pyridoxine 5'-phosphate + phosphate + 2 H2O + H(+). It participates in cofactor biosynthesis; pyridoxine 5'-phosphate biosynthesis; pyridoxine 5'-phosphate from D-erythrose 4-phosphate: step 5/5. Catalyzes the complicated ring closure reaction between the two acyclic compounds 1-deoxy-D-xylulose-5-phosphate (DXP) and 3-amino-2-oxopropyl phosphate (1-amino-acetone-3-phosphate or AAP) to form pyridoxine 5'-phosphate (PNP) and inorganic phosphate. The polypeptide is Pyridoxine 5'-phosphate synthase (Nostoc sp. (strain PCC 7120 / SAG 25.82 / UTEX 2576)).